The sequence spans 242 residues: uncharacterized protein (242 aa).

An HTH gntR-type domain is found at 17-85 (QRVDERIATT…HGSGSVVRDP (69 aa)). The segment at residues 45–64 (ERDLAERLGVNRTSLRQGLA) is a DNA-binding region (H-T-H motif).

This is an uncharacterized protein from Mycobacterium tuberculosis (strain ATCC 25618 / H37Rv).